The primary structure comprises 349 residues: Isopentenyl-diphosphate delta-isomerase (349 aa).

8 to 9 provides a ligand contact to substrate; that stretch reads RK. Residues serine 66, 67 to 69, serine 97, and asparagine 125 contribute to the FMN site; that span reads SMT. A substrate-binding site is contributed by 97–99; sequence STR. Glutamine 160 lines the substrate pocket. Glutamate 161 lines the Mg(2+) pocket. FMN contacts are provided by residues lysine 192, threonine 222, 272-274, and 293-294; these read GMK and AR.

Belongs to the IPP isomerase type 2 family. Homooctamer. Dimer of tetramers. FMN serves as cofactor. NADPH is required as a cofactor. Requires Mg(2+) as cofactor.

Its subcellular location is the cytoplasm. The catalysed reaction is isopentenyl diphosphate = dimethylallyl diphosphate. Involved in the biosynthesis of isoprenoids. Catalyzes the 1,3-allylic rearrangement of the homoallylic substrate isopentenyl (IPP) to its allylic isomer, dimethylallyl diphosphate (DMAPP). This chain is Isopentenyl-diphosphate delta-isomerase, found in Oceanobacillus iheyensis (strain DSM 14371 / CIP 107618 / JCM 11309 / KCTC 3954 / HTE831).